The sequence spans 182 residues: RNA pyrophosphohydrolase (182 aa).

The Nudix hydrolase domain maps to Gly-6–Asn-149. The Nudix box motif lies at Gly-38–Gly-59. Residues Pro-162–Glu-182 form a disordered region.

It belongs to the Nudix hydrolase family. RppH subfamily. Requires a divalent metal cation as cofactor.

Its function is as follows. Accelerates the degradation of transcripts by removing pyrophosphate from the 5'-end of triphosphorylated RNA, leading to a more labile monophosphorylated state that can stimulate subsequent ribonuclease cleavage. The protein is RNA pyrophosphohydrolase of Dechloromonas aromatica (strain RCB).